The sequence spans 510 residues: NAD(P)H-quinone oxidoreductase subunit 2 B, chloroplastic (510 aa).

Helical transmembrane passes span 24–44, 57–77, 99–119, 124–144, 150–170, 183–203, 227–247, 295–315, 323–343, 347–367, 395–415, 418–438, and 484–504; these read LLLFHGSFIFPECILIFGLIL, IPWLYFISSTSLVMSITALLF, IFQFLILLCSTLCIPLSVEYI, MAITEFLLFVLTATLGGMFLC, ITIFVAPECFSLCSYLLSGYT, YLLMGGASSSILVHGFSWLYG, PGISIALISITVGIGFKLSPA, WHLLLEILAILSMILGNLIAI, MLAYSSIGQIGYVIIGIIVGD, GYASMITYMLFYISMNLGTFA, ALSSALCLLSLGGLPPLAGFF, LHLFWCGWQAGLYFLVSIGLL, and MIVCVIASTIPGISMNPIIAI.

The protein belongs to the complex I subunit 2 family. As to quaternary structure, NDH is composed of at least 16 different subunits, 5 of which are encoded in the nucleus.

The protein localises to the plastid. The protein resides in the chloroplast thylakoid membrane. It carries out the reaction a plastoquinone + NADH + (n+1) H(+)(in) = a plastoquinol + NAD(+) + n H(+)(out). The enzyme catalyses a plastoquinone + NADPH + (n+1) H(+)(in) = a plastoquinol + NADP(+) + n H(+)(out). Functionally, NDH shuttles electrons from NAD(P)H:plastoquinone, via FMN and iron-sulfur (Fe-S) centers, to quinones in the photosynthetic chain and possibly in a chloroplast respiratory chain. The immediate electron acceptor for the enzyme in this species is believed to be plastoquinone. Couples the redox reaction to proton translocation, and thus conserves the redox energy in a proton gradient. This chain is NAD(P)H-quinone oxidoreductase subunit 2 B, chloroplastic, found in Chloranthus spicatus (Chulantree).